A 770-amino-acid chain; its full sequence is 3-isopropylmalate dehydratase (770 aa).

Residues Cys-354, Cys-415, and Cys-418 each coordinate [4Fe-4S] cluster.

It belongs to the aconitase/IPM isomerase family. Monomer. [4Fe-4S] cluster serves as cofactor.

The enzyme catalyses (2R,3S)-3-isopropylmalate = (2S)-2-isopropylmalate. Its pathway is amino-acid biosynthesis; L-leucine biosynthesis; L-leucine from 3-methyl-2-oxobutanoate: step 2/4. In terms of biological role, catalyzes the isomerization between 2-isopropylmalate and 3-isopropylmalate, via the formation of 2-isopropylmaleate. This is 3-isopropylmalate dehydratase (LEU1) from Candida maltosa (Yeast).